We begin with the raw amino-acid sequence, 132 residues long: Small ribosomal subunit protein uS19 (132 aa).

It belongs to the universal ribosomal protein uS19 family.

In terms of biological role, protein S19 forms a complex with S13 that binds strongly to the 16S ribosomal RNA. The protein is Small ribosomal subunit protein uS19 (rps19) of Pyrococcus horikoshii (strain ATCC 700860 / DSM 12428 / JCM 9974 / NBRC 100139 / OT-3).